Here is a 147-residue protein sequence, read N- to C-terminus: Large ribosomal subunit protein uL15 (147 aa).

The tract at residues 1 to 58 (MKLHELKPAQGSTKAPKRLGRGIGSGTGKTSGKGHKGQKARAGGGVRPGFEGGQQPLA) is disordered. Composition is skewed to gly residues over residues 21-31 (RGIGSGTGKTS) and 42-52 (AGGGVRPGFEG).

This sequence belongs to the universal ribosomal protein uL15 family. In terms of assembly, part of the 50S ribosomal subunit.

Its function is as follows. Binds to the 23S rRNA. The sequence is that of Large ribosomal subunit protein uL15 from Desulfitobacterium hafniense (strain Y51).